A 205-amino-acid chain; its full sequence is Mitotic spindle assembly checkpoint protein MAD2A (205 aa).

Residue Ala-2 is modified to N-acetylalanine. 6 positions are modified to phosphoserine: Ser-6, Ser-130, Ser-170, Ser-178, Ser-185, and Ser-195. The HORMA domain maps to 14–197; that stretch reads RGSAEIVAEF…TTIHKVNSMV (184 aa). The segment at 195 to 205 is required for assuming the closed conformation and for interaction with CDC20; the sequence is SMVAYKIPVND.

This sequence belongs to the MAD2 family. In terms of assembly, monomer and homodimer. Heterodimerizes with MAD2L1 in order to form a tetrameric MAD1L1-MAD2L1 core complex. In the closed and open conformation, interacts with MAD1L1. Formation of a heterotetrameric core complex containing two molecules each of MAD1L1 and of MAD2L1 promotes binding of another molecule of MAD2L1 to each MAD2L1, resulting in a heterohexamer. Interacts with MAD2L1BP. Interacts with ADAM17/TACE. Interacts with CDC20. Dimeric MAD2L1 in the closed conformation interacts with CDC20. Monomeric MAD2L1 in the open conformation does not interact with CDC20. CDC20 competes with MAD1L1 for MAD2L1 binding. In the closed conformation, interacts with BUB1B. Interacts with TTK. Interacts with TPR. Binds to UBD (via ubiquitin-like 1 domain) during mitosis. Interacts with isoform 1 and isoform 2 of NEK2. Interacts with HSF1; this interaction occurs in mitosis. Interacts with isoform 3 of MAD1L1; this interaction leads to the cytoplasmic sequestration of MAD2L1. In terms of processing, phosphorylated on multiple serine residues. The level of phosphorylation varies during the cell cycle and is highest during mitosis. Phosphorylation abolishes interaction with MAD1L1 and reduces interaction with CDC20. Phosphorylated by NEK2.

The protein resides in the nucleus. Its subcellular location is the chromosome. The protein localises to the centromere. It is found in the kinetochore. It localises to the cytoplasm. The protein resides in the cytoskeleton. Its subcellular location is the spindle pole. Its function is as follows. Component of the spindle-assembly checkpoint that prevents the onset of anaphase until all chromosomes are properly aligned at the metaphase plate. In the closed conformation (C-MAD2) forms a heterotetrameric complex with MAD1L1 at unattached kinetochores during prometaphase, the complex recruits open conformation molecules of MAD2L1 (O-MAD2) and then promotes the conversion of O-MAD2 to C-MAD2. Required for the execution of the mitotic checkpoint which monitors the process of kinetochore-spindle attachment and inhibits the activity of the anaphase promoting complex by sequestering CDC20 until all chromosomes are aligned at the metaphase plate. This Homo sapiens (Human) protein is Mitotic spindle assembly checkpoint protein MAD2A (MAD2L1).